We begin with the raw amino-acid sequence, 860 residues long: SH2 domain-containing protein 3C (860 aa).

Ser-22 bears the Phosphoserine mark. 2 disordered regions span residues 51–117 and 130–180; these read EATQ…PPGL and PLED…PEAG. Over residues 162–175 the composition is skewed to basic and acidic residues; it reads ERPPRDVHSERAAG. The SH2 domain occupies 220–319; the sequence is WYHGRIPREV…QSGAIIYCPV (100 aa). Phosphotyrosine occurs at positions 278 and 283. The disordered stretch occupies residues 335–537; the sequence is GQGSSKPASP…LSENGAPEGD (203 aa). The residue at position 359 (Ser-359) is a Phosphoserine. Low complexity-rich tracts occupy residues 405–420, 427–443, and 479–490; these read SPMSPISESPSSPAYS, AAPAAPSATALPASPVA, and SPSPSLSSYSDP. At Ser-440 the chain carries Phosphoserine. The Ras-GEF domain occupies 586 to 854; that stretch reads DARTLARHVT…TALSHKLEPA (269 aa). Tyr-793 carries the post-translational modification Phosphotyrosine.

In terms of assembly, component of a complex comprised of SH2D3C, BCAR1/CAS, and CRK. Within the complex, interacts with CRK and (via C-terminus) with BCAR1/CAS (via C-terminus). Interacts with NEDD9/HEF1. Interacts with EPHB2. Interacts with NEDD9/HEF1. Interacts with BCAR1/CAS. Interacts with PTK2B. As to quaternary structure, interacts (via C-terminus) with BCAR1/CAS (via C-terminus). Interacts with IGF1. Post-translationally, phosphorylated by MAPK/ERK upon T-cell receptor stimulation in T-cells. As to expression, ubiquitously expressed.

It is found in the cytoplasm. It localises to the cell membrane. Its subcellular location is the cell projection. The protein resides in the axon. The protein localises to the ruffle membrane. Functionally, acts as an adapter protein that mediates cell signaling pathways involved in cellular functions such as cell adhesion and migration, tissue organization, and the regulation of the immune response. Plays a role in integrin-mediated cell adhesion through BCAR1-CRK-RAPGEF1 signaling and activation of the small GTPase RAP1. Promotes cell migration and invasion through the extracellular matrix. Required for marginal zone B-cell development and thymus-independent type 2 immune responses. Mediates migration and adhesion of B cells in the splenic marginal zone via promoting hyperphosphorylation of NEDD9/CASL. Plays a role in CXCL13-induced chemotaxis of B-cells. Plays a role in the migration of olfactory sensory neurons (OSNs) into the forebrain and the innervation of the olfactory bulb by the OSN axons during development. Required for the efficient tyrosine phosphorylation of BCAR1 in OSN axons. Its function is as follows. Important regulator of chemokine-induced, integrin-mediated T lymphocyte adhesion and migration, acting upstream of RAP1. Required for tissue-specific adhesion of T lymphocytes to peripheral tissues. Required for basal and CXCL2 stimulated serine-threonine phosphorylation of NEDD9. May be involved in the regulation of T-cell receptor-mediated IL2 production through the activation of the JNK pathway in T-cells. May be involved in the BCAR1/CAS-mediated JNK activation pathway. The chain is SH2 domain-containing protein 3C (SH2D3C) from Homo sapiens (Human).